Here is a 257-residue protein sequence, read N- to C-terminus: MQTKPINQLDFVDSELTSFVSHLETTYLDQNKGAFIVTANPEIGFEAMQNPRYEAVLSSADFILPDGIGVVMVSKLIGKPLQSRIAGYDLFTSLLDKADQKKKRVFFYGAAKHVIAETIERVKRDFPGIEIAGYSDGYVKDQREVADKIAASTPDMVFVALGYPNQEFFIHKYRHLFPQAVAVGLGGSFDVFSGNVKRAPSFFIRFHLEWMYRLLTNPARWRRMLSIPKYVTAVLKHERASAKPHYTGQVKDQSRHL.

This sequence belongs to the glycosyltransferase 26 family. TagA/TarA subfamily.

It catalyses the reaction UDP-N-acetyl-alpha-D-mannosamine + N-acetyl-alpha-D-glucosaminyl-di-trans,octa-cis-undecaprenyl diphosphate = N-acetyl-beta-D-mannosaminyl-(1-&gt;4)-N-acetyl-alpha-D-glucosaminyl di-trans,octa-cis-undecaprenyl diphosphate + UDP + H(+). Its pathway is cell wall biogenesis; poly(ribitol phosphate) teichoic acid biosynthesis. Functionally, catalyzes the conversion of GlcNAc-PP-undecaprenol into ManNAc-GlcNAc-PP-undecaprenol, the first committed lipid intermediate in the de novo synthesis of teichoic acid. The protein is N-acetylglucosaminyldiphosphoundecaprenol N-acetyl-beta-D-mannosaminyltransferase of Bacillus spizizenii (strain ATCC 23059 / NRRL B-14472 / W23) (Bacillus subtilis subsp. spizizenii).